A 55-amino-acid chain; its full sequence is Major pollen allergen Dac g 4 (55 aa).

The sequence is that of Major pollen allergen Dac g 4 from Dactylis glomerata (Orchard grass).